Consider the following 299-residue polypeptide: Probable lipid kinase YegS-like (299 aa).

A DAGKc domain is found at 2–133; sequence EKNPITLLIL…IDIAKVNDGH (132 aa). ATP contacts are provided by residues Thr-40, 66-72, and Thr-95; that span reads GDGTVNE. Positions 215, 218, and 220 each coordinate Mg(2+). Glu-271 serves as the catalytic Proton acceptor.

This sequence belongs to the diacylglycerol/lipid kinase family. YegS lipid kinase subfamily. It depends on Mg(2+) as a cofactor. Ca(2+) is required as a cofactor.

It localises to the cytoplasm. Functionally, probably phosphorylates lipids; the in vivo substrate is unknown. The protein is Probable lipid kinase YegS-like of Pectobacterium atrosepticum (strain SCRI 1043 / ATCC BAA-672) (Erwinia carotovora subsp. atroseptica).